Consider the following 474-residue polypeptide: Cysteine--tRNA ligase (474 aa).

Cysteine 27 provides a ligand contact to Zn(2+). Positions 29–39 (PTVYNYIHIGN) match the 'HIGH' region motif. Residues cysteine 212, histidine 237, and glutamate 241 each contribute to the Zn(2+) site. The short motif at 271–275 (KMSKS) is the 'KMSKS' region element. Lysine 274 is a binding site for ATP.

The protein belongs to the class-I aminoacyl-tRNA synthetase family. As to quaternary structure, monomer. Zn(2+) is required as a cofactor.

The protein resides in the cytoplasm. It carries out the reaction tRNA(Cys) + L-cysteine + ATP = L-cysteinyl-tRNA(Cys) + AMP + diphosphate. This is Cysteine--tRNA ligase from Lactobacillus delbrueckii subsp. bulgaricus (strain ATCC 11842 / DSM 20081 / BCRC 10696 / JCM 1002 / NBRC 13953 / NCIMB 11778 / NCTC 12712 / WDCM 00102 / Lb 14).